A 92-amino-acid polypeptide reads, in one-letter code: WAP four-disulfide core domain protein 12 (92 aa).

An N-terminal signal peptide occupies residues M1–G23. The WAP domain maps to N27 to V74. 4 disulfide bridges follow: C34–C62, C41–C66, C49–C61, and C55–C70.

Its subcellular location is the secreted. In terms of biological role, antibacterial protein. Putative acid-stable proteinase inhibitor. The protein is WAP four-disulfide core domain protein 12 (WFDC12) of Aotus nancymaae (Ma's night monkey).